We begin with the raw amino-acid sequence, 260 residues long: uncharacterized protein (260 aa).

Residues 1-38 (MNWTREIEQYKQVVASYKLKMKRMEMKISDISEEKRQS) adopt a coiled-coil conformation.

This is an uncharacterized protein from Caenorhabditis elegans.